The primary structure comprises 284 residues: Bifunctional protein FolD 1 (284 aa).

NADP(+) contacts are provided by residues 164 to 166 (GRS), Ser-189, and Ile-230.

The protein belongs to the tetrahydrofolate dehydrogenase/cyclohydrolase family. In terms of assembly, homodimer.

The catalysed reaction is (6R)-5,10-methylene-5,6,7,8-tetrahydrofolate + NADP(+) = (6R)-5,10-methenyltetrahydrofolate + NADPH. It catalyses the reaction (6R)-5,10-methenyltetrahydrofolate + H2O = (6R)-10-formyltetrahydrofolate + H(+). The protein operates within one-carbon metabolism; tetrahydrofolate interconversion. Functionally, catalyzes the oxidation of 5,10-methylenetetrahydrofolate to 5,10-methenyltetrahydrofolate and then the hydrolysis of 5,10-methenyltetrahydrofolate to 10-formyltetrahydrofolate. This chain is Bifunctional protein FolD 1, found in Rubrobacter xylanophilus (strain DSM 9941 / JCM 11954 / NBRC 16129 / PRD-1).